Consider the following 75-residue polypeptide: Small ribosomal subunit protein bS18 (75 aa).

It belongs to the bacterial ribosomal protein bS18 family. As to quaternary structure, part of the 30S ribosomal subunit. Forms a tight heterodimer with protein bS6.

Functionally, binds as a heterodimer with protein bS6 to the central domain of the 16S rRNA, where it helps stabilize the platform of the 30S subunit. In Desulforudis audaxviator (strain MP104C), this protein is Small ribosomal subunit protein bS18.